The chain runs to 376 residues: UPF0754 membrane protein SE_1527 (376 aa).

The next 2 membrane-spanning stretches (helical) occupy residues 4 to 24 (ILLV…TNMI) and 356 to 376 (TLGF…AIFV).

Belongs to the UPF0754 family.

Its subcellular location is the cell membrane. The sequence is that of UPF0754 membrane protein SE_1527 from Staphylococcus epidermidis (strain ATCC 12228 / FDA PCI 1200).